The sequence spans 265 residues: 3-methyl-2-oxobutanoate hydroxymethyltransferase (265 aa).

Aspartate 43 and aspartate 82 together coordinate Mg(2+). 3-methyl-2-oxobutanoate is bound by residues 43-44 (DS), aspartate 82, and lysine 111. Mg(2+) is bound at residue glutamate 113. The active-site Proton acceptor is glutamate 180.

The protein belongs to the PanB family. As to quaternary structure, homodecamer; pentamer of dimers. Mg(2+) serves as cofactor.

Its subcellular location is the cytoplasm. It carries out the reaction 3-methyl-2-oxobutanoate + (6R)-5,10-methylene-5,6,7,8-tetrahydrofolate + H2O = 2-dehydropantoate + (6S)-5,6,7,8-tetrahydrofolate. It functions in the pathway cofactor biosynthesis; (R)-pantothenate biosynthesis; (R)-pantoate from 3-methyl-2-oxobutanoate: step 1/2. Functionally, catalyzes the reversible reaction in which hydroxymethyl group from 5,10-methylenetetrahydrofolate is transferred onto alpha-ketoisovalerate to form ketopantoate. In Francisella tularensis subsp. holarctica (strain OSU18), this protein is 3-methyl-2-oxobutanoate hydroxymethyltransferase.